The primary structure comprises 205 residues: Cytochrome c biogenesis ATP-binding export protein CcmA 1 (205 aa).

The ABC transporter domain maps to 2-205; that stretch reads LEARDLYCER…LALTGGEAGL (204 aa). An ATP-binding site is contributed by 34–41; the sequence is GGNGAGKT.

The protein belongs to the ABC transporter superfamily. CcmA exporter (TC 3.A.1.107) family. The complex is composed of two ATP-binding proteins (CcmA) and two transmembrane proteins (CcmB).

The protein resides in the cell inner membrane. It carries out the reaction heme b(in) + ATP + H2O = heme b(out) + ADP + phosphate + H(+). In terms of biological role, part of the ABC transporter complex CcmAB involved in the biogenesis of c-type cytochromes; once thought to export heme, this seems not to be the case, but its exact role is uncertain. Responsible for energy coupling to the transport system. The polypeptide is Cytochrome c biogenesis ATP-binding export protein CcmA 1 (Salmonella paratyphi A (strain ATCC 9150 / SARB42)).